The chain runs to 316 residues: UDP-N-acetylenolpyruvoylglucosamine reductase (316 aa).

One can recognise an FAD-binding PCMH-type domain in the interval 27 to 225 (VGGKAERFYR…KTAINALLKK (199 aa)). The active site involves arginine 190. The active-site Proton donor is the serine 239. Glutamate 309 is a catalytic residue.

The protein belongs to the MurB family. Requires FAD as cofactor.

Its subcellular location is the cytoplasm. The enzyme catalyses UDP-N-acetyl-alpha-D-muramate + NADP(+) = UDP-N-acetyl-3-O-(1-carboxyvinyl)-alpha-D-glucosamine + NADPH + H(+). The protein operates within cell wall biogenesis; peptidoglycan biosynthesis. Cell wall formation. The protein is UDP-N-acetylenolpyruvoylglucosamine reductase of Coxiella burnetii (strain CbuK_Q154) (Coxiella burnetii (strain Q154)).